Reading from the N-terminus, the 842-residue chain is Translation initiation factor IF-2 (842 aa).

The interval 121–144 (TESTSVEKSESDDVTLEEESSKKV) is disordered. The tr-type G domain maps to 340-510 (PRAPVVTVMG…LLMAELLELK (171 aa)). The G1 stretch occupies residues 349-356 (GHVDHGKT). 349-356 (GHVDHGKT) contributes to the GTP binding site. Residues 374–378 (GITQH) are G2. The interval 396–399 (DTPG) is G3. Residues 396 to 400 (DTPGH) and 450 to 453 (NKID) contribute to the GTP site. The interval 450–453 (NKID) is G4. The segment at 486–488 (SAK) is G5.

This sequence belongs to the TRAFAC class translation factor GTPase superfamily. Classic translation factor GTPase family. IF-2 subfamily.

The protein resides in the cytoplasm. In terms of biological role, one of the essential components for the initiation of protein synthesis. Protects formylmethionyl-tRNA from spontaneous hydrolysis and promotes its binding to the 30S ribosomal subunits. Also involved in the hydrolysis of GTP during the formation of the 70S ribosomal complex. The chain is Translation initiation factor IF-2 from Ehrlichia chaffeensis (strain ATCC CRL-10679 / Arkansas).